Consider the following 333-residue polypeptide: Homoserine O-succinyltransferase (333 aa).

The Acyl-thioester intermediate role is filled by Cys147. Lys168 and Ser196 together coordinate substrate. Catalysis depends on His239, which acts as the Proton acceptor. Glu241 is an active-site residue. Arg253 is a binding site for substrate.

This sequence belongs to the MetA family.

The protein localises to the cytoplasm. It catalyses the reaction L-homoserine + succinyl-CoA = O-succinyl-L-homoserine + CoA. The protein operates within amino-acid biosynthesis; L-methionine biosynthesis via de novo pathway; O-succinyl-L-homoserine from L-homoserine: step 1/1. Its function is as follows. Transfers a succinyl group from succinyl-CoA to L-homoserine, forming succinyl-L-homoserine. In Rhodopseudomonas palustris, this protein is Homoserine O-succinyltransferase.